We begin with the raw amino-acid sequence, 338 residues long: HLA class I histocompatibility antigen, alpha chain G (338 aa).

Positions 1 to 24 are cleaved as a signal peptide; sequence MVVMAPRTLFLLLSGALTLTETWA. Residues 3-11 are VL9 epitope; sequence VMAPRTLFL. The segment at 25-114 is alpha-1; that stretch reads GSHSMRYFSA…LRGYYNQSEA (90 aa). At 25-308 the chain is on the extracellular side; the sequence is GSHSMRYFSA…KQSSLPTIPI (284 aa). 4 residues coordinate a peptide antigen: Tyr-31, His-94, Asn-101, and Tyr-108. Asn-110 is a glycosylation site (N-linked (GlcNAc...) asparagine). The alpha-2 stretch occupies residues 115–206; sequence SSHTLQWMIG…ENGKEMLQRA (92 aa). Cys-125 and Cys-188 are disulfide-bonded. Residues Ser-167, Lys-170, Gln-179, Arg-180, Tyr-183, and Tyr-195 each contribute to the a peptide antigen site. Residues 207 to 298 form an alpha-3 region; the sequence is DPPKTHVTHH…GLPEPLMLRW (92 aa). Positions 209–299 constitute an Ig-like C1-type domain; sequence PKTHVTHHPV…LPEPLMLRWK (91 aa). Cys-227 and Cys-283 are joined by a disulfide. The tract at residues 299–308 is connecting peptide; sequence KQSSLPTIPI. A helical transmembrane segment spans residues 309 to 332; it reads MGIVAGLVVLAAVVTGAAVAAVLW. The Cytoplasmic portion of the chain corresponds to 333–338; it reads RKKSSD. The ER-retrieval signal motif lies at 334–336; sequence KKS.

The protein belongs to the MHC class I family. In terms of assembly, forms a heterotrimer with B2M and a self-peptide (peptide-bound HLA-G-B2M). HLA-G-B2M complex interacts with components of the antigen processing machinery TAPBP and TAP1-TAP2 complex; this interaction is required for loading of high affinity peptides and heterotrimer translocation to the cell surface. Interacts with CALCR; this interaction is required for appropriate folding. Interacts with COPB1; this interaction mediates the endoplasmic reticulum (ER) retrieval of HLA-G-B2M complexes that bind low affinity peptides. On the cell surface, peptide-bound HLA-G-B2M molecules (referred to as monomers) can form disulfide-linked homomultimers, homodimers and homotrimers. Interacts with KIR2DL4; this interaction is direct. Interacts with LILRB1 and LILRB2 receptors; this interaction is direct. Interacts with CD160; this interactions is direct. Interacts with CD8A homodimer; this interaction is direct and might down-regulate T cell receptor signaling. Isoform 2: Forms a non-disulfide-linked homodimer and interacts with LILRB2. Post-translationally, N-glycosylated. Produced by proteolytic cleavage at the cell surface (shedding) by matrix metalloproteinase MMP2. In terms of tissue distribution, expressed in adult eye. Expressed in immune cell subsets including monocytes, myeloid and plasmacytoid dendritic cells and regulatory T cells (Tr1)(at protein level). Secreted by follicular dendritic cell and follicular helper T cells. As to expression, detected in physiological fluids including amniotic fluid and serum. Expressed in placenta, amniotic membrane, skin, cord blood and peripheral blood mononuclear cells.

It is found in the cell membrane. The protein localises to the endoplasmic reticulum membrane. The protein resides in the early endosome membrane. Its subcellular location is the secreted. It localises to the early endosome. It is found in the cell projection. The protein localises to the filopodium membrane. In terms of biological role, non-classical major histocompatibility class Ib molecule involved in immune regulatory processes at the maternal-fetal interface. In complex with B2M/beta-2 microglobulin binds a limited repertoire of nonamer self-peptides derived from intracellular proteins including histones and ribosomal proteins. Peptide-bound HLA-G-B2M complex acts as a ligand for inhibitory/activating KIR2DL4, LILRB1 and LILRB2 receptors on uterine immune cells to promote fetal development while maintaining maternal-fetal tolerance. Upon interaction with KIR2DL4 and LILRB1 receptors on decidual NK cells, it triggers NK cell senescence-associated secretory phenotype as a molecular switch to promote vascular remodeling and fetal growth in early pregnancy. Through interaction with KIR2DL4 receptor on decidual macrophages induces pro-inflammatory cytokine production mainly associated with tissue remodeling. Through interaction with LILRB2 receptor triggers differentiation of type 1 regulatory T cells and myeloid-derived suppressor cells, both of which actively maintain maternal-fetal tolerance. May play a role in balancing tolerance and antiviral-immunity at maternal-fetal interface by keeping in check the effector functions of NK, CD8+ T cells and B cells. Reprograms B cells toward an immune suppressive phenotype via LILRB1. May induce immune activation/suppression via intercellular membrane transfer (trogocytosis), likely enabling interaction with KIR2DL4, which resides mostly in endosomes. Through interaction with the inhibitory receptor CD160 on endothelial cells may control angiogenesis in immune privileged sites. Functionally, likely does not bind B2M and presents peptides. Negatively regulates NK cell- and CD8+ T cell-mediated cytotoxicity. Non-classical major histocompatibility class Ib molecule involved in immune regulatory processes at the maternal-fetal interface. In complex with B2M/beta-2 microglobulin binds a limited repertoire of nonamer self-peptides derived from intracellular proteins including histones and ribosomal proteins. Peptide-bound HLA-G-B2M complex acts as a ligand for inhibitory/activating KIR2DL4, LILRB1 and LILRB2 receptors on uterine immune cells to promote fetal development while maintaining maternal-fetal tolerance. Upon interaction with KIR2DL4 and LILRB1 receptors on decidual NK cells, it triggers NK cell senescence-associated secretory phenotype as a molecular switch to promote vascular remodeling and fetal growth in early pregnancy. Through interaction with KIR2DL4 receptor on decidual macrophages induces pro-inflammatory cytokine production mainly associated with tissue remodeling. Through interaction with LILRB2 receptor triggers differentiation of type 1 regulatory T cells and myeloid-derived suppressor cells, both of which actively maintain maternal-fetal tolerance. Reprograms B cells toward an immune suppressive phenotype via LILRB1. Its function is as follows. Likely does not bind B2M and presents peptides. The protein is HLA class I histocompatibility antigen, alpha chain G of Homo sapiens (Human).